Consider the following 127-residue polypeptide: Apolipoprotein C-IV (127 aa).

Residues 1–27 form the signal peptide; the sequence is MSLLRNRLQDLPALCLCVLVLACIGAC.

Belongs to the apolipoprotein C4 family.

It localises to the secreted. In terms of biological role, may participate in lipoprotein metabolism. This is Apolipoprotein C-IV (APOC4) from Chlorocebus sabaeus (Green monkey).